Consider the following 605-residue polypeptide: Alpha-1,3-galactosidase B (605 aa).

Residues 1 to 19 form the signal peptide; that stretch reads MKRIIFNFCFVWLAVSAFA. 3 PbH1 repeats span residues 428–450, 451–473, and 484–538; these read CPEVYFADNVIRNNRARGTLFST, PLKTVVERNLFDHTSGTAILLCG, and CRNV…VIED.

The protein belongs to the glycosyl hydrolase 110 family. B subfamily.

The enzyme catalyses Hydrolysis of terminal, non-reducing branched (1-&gt;3)-alpha-D-galactosidic residues, producing free D-galactose.. It catalyses the reaction Hydrolysis of terminal, non-reducing linear (1-&gt;3)-alpha-D-galactosidic residues, producing free D-galactose.. The catalysed reaction is Hydrolysis of terminal, non-reducing alpha-D-galactose residues in alpha-D-galactosides, including galactose oligosaccharides, galactomannans and galactolipids.. In terms of biological role, alpha-galactosidase. Removes both branched alpha-1,3-linked galactose residues of blood group B antigens and linear alpha-1,3-linked galactose structures. The chain is Alpha-1,3-galactosidase B (glaB2) from Phocaeicola vulgatus (strain ATCC 8482 / DSM 1447 / JCM 5826 / CCUG 4940 / NBRC 14291 / NCTC 11154) (Bacteroides vulgatus).